Reading from the N-terminus, the 59-residue chain is MAVPKKRTSMSKKRIRKNLWKKKTYFSIVQSYSLAKSRSFSGVSEHPKPKGFSRQQTNK.

A disordered region spans residues 36–59; sequence KSRSFSGVSEHPKPKGFSRQQTNK.

Belongs to the bacterial ribosomal protein bL32 family.

The protein resides in the plastid. Its subcellular location is the chloroplast. This is Large ribosomal subunit protein bL32c from Oryza nivara (Indian wild rice).